We begin with the raw amino-acid sequence, 741 residues long: Mitofusin-1 (741 aa).

Residues 1–584 lie on the Cytoplasmic side of the membrane; it reads MAEPVSPLKH…ASQEELMITL (584 aa). A part of a helix bundle domain, formed by helices from N-terminal and C-terminal regions region spans residues 9–73; it reads KHFVLAKKAI…LSIIGEVLSR (65 aa). Positions 72–321 constitute a Dynamin-type G domain; that stretch reads SRRHMKVAFF…ARLQEFQNFE (250 aa). The G1 motif stretch occupies residues 82–89; sequence GRTSSGKS. 85–90 is a binding site for GTP; sequence SSGKSS. The tract at residues 108–109 is G2 motif; it reads IT. A G3 motif region spans residues 178–181; it reads DSPG. 237–240 is a GTP binding site; that stretch reads NRWD. A G4 motif region spans residues 237–240; the sequence is NRWD. Residue Glu-266 is a region of interest, G5 motif. Residues Ser-284 and Lys-286 each contribute to the GTP site. The interval 338–364 is part of a helix bundle domain, formed by helices from N-terminal and C-terminal regions; sequence EQHTIRAKQILATVKNIMDSVNLAAED. Residues 371–408 adopt a coiled-coil conformation; it reads EEREDQIDRLDFIRNQMNLLTLDVKKKIKEVTEEVANK. Residues 585-605 traverse the membrane as a helical segment; sequence VTGLASVTSRTSMGIIIVGGV. Residues 606–608 lie on the Mitochondrial intermembrane side of the membrane; sequence IWK. A helical transmembrane segment spans residues 609–629; it reads TIGWKLLSVSLTMYGALYLYE. Topologically, residues 630 to 741 are cytoplasmic; it reads RLSWTTHAKE…QFLPSSNEES (112 aa). The stretch at 679-734 forms a coiled coil; it reads RLCQQVDITQKQLEEEIARLPKEIDQLEKIQNNSKLLRNKAVQLENELENFTKQFL. A part of a helix bundle domain, formed by helices from N-terminal and C-terminal regions region spans residues 703–734; that stretch reads DQLEKIQNNSKLLRNKAVQLENELENFTKQFL.

The protein belongs to the TRAFAC class dynamin-like GTPase superfamily. Dynamin/Fzo/YdjA family. Mitofusin subfamily. As to quaternary structure, homodimer, also in the absence of bound GTP. Forms higher oligomers in the presence of a transition state GTP analog. Forms homomultimers and heteromultimers with MFN2. Oligomerization is essential for mitochondrion fusion. Component of a high molecular weight multiprotein complex. Interacts with VAT1. Interacts with THG1L; THG1L probably functions as a guanyl-nucleotide exchange factor/GEF, activating MFN1. Ubiquitinated by non-degradative ubiquitin by PRKN. Deubiquitination by USP30 inhibits mitochondrial fusion. Ubiquitinated by MARCHF5. When mitochondria are depolarized and dysfunctional, it is ubiquitinated by a SCF (SKP1-CUL1-F-box protein) E3 ubiquitin-protein ligase complex that contains FBXO7 and PRKN. In terms of tissue distribution, detected in kidney and heart (at protein level). Ubiquitous. Expressed at slightly higher level in kidney and heart. Isoform 2 may be overexpressed in some tumors, such as lung cancers.

Its subcellular location is the mitochondrion outer membrane. The protein resides in the cytoplasm. The catalysed reaction is GTP + H2O = GDP + phosphate + H(+). Functionally, mitochondrial outer membrane GTPase that mediates mitochondrial clustering and fusion. Membrane clustering requires GTPase activity. It may involve a major rearrangement of the coiled coil domains. Mitochondria are highly dynamic organelles, and their morphology is determined by the equilibrium between mitochondrial fusion and fission events. Overexpression induces the formation of mitochondrial networks (in vitro). Has low GTPase activity. This is Mitofusin-1 (MFN1) from Homo sapiens (Human).